Reading from the N-terminus, the 481-residue chain is Glutamyl-tRNA(Gln) amidotransferase subunit A (481 aa).

Residues Lys-75 and Ser-150 each act as charge relay system in the active site. The active-site Acyl-ester intermediate is Ser-174.

This sequence belongs to the amidase family. GatA subfamily. Heterotrimer of A, B and C subunits.

It carries out the reaction L-glutamyl-tRNA(Gln) + L-glutamine + ATP + H2O = L-glutaminyl-tRNA(Gln) + L-glutamate + ADP + phosphate + H(+). Allows the formation of correctly charged Gln-tRNA(Gln) through the transamidation of misacylated Glu-tRNA(Gln) in organisms which lack glutaminyl-tRNA synthetase. The reaction takes place in the presence of glutamine and ATP through an activated gamma-phospho-Glu-tRNA(Gln). The chain is Glutamyl-tRNA(Gln) amidotransferase subunit A from Macrococcus caseolyticus (strain JCSC5402) (Macrococcoides caseolyticum).